The following is a 156-amino-acid chain: S-ribosylhomocysteine lyase (156 aa).

Residues His54, His58, and Cys123 each coordinate Fe cation.

This sequence belongs to the LuxS family. Homodimer. Fe cation serves as cofactor.

The catalysed reaction is S-(5-deoxy-D-ribos-5-yl)-L-homocysteine = (S)-4,5-dihydroxypentane-2,3-dione + L-homocysteine. Its function is as follows. Involved in the synthesis of autoinducer 2 (AI-2) which is secreted by bacteria and is used to communicate both the cell density and the metabolic potential of the environment. The regulation of gene expression in response to changes in cell density is called quorum sensing. Catalyzes the transformation of S-ribosylhomocysteine (RHC) to homocysteine (HC) and 4,5-dihydroxy-2,3-pentadione (DPD). The protein is S-ribosylhomocysteine lyase of Ligilactobacillus salivarius (strain UCC118) (Lactobacillus salivarius).